The sequence spans 103 residues: Small ribosomal subunit protein bS18 (103 aa).

Residues Met-1–Gln-19 are compositionally biased toward basic and acidic residues. The interval Met-1–Arg-33 is disordered. The span at Gly-24–Arg-33 shows a compositional bias: basic residues.

It belongs to the bacterial ribosomal protein bS18 family. In terms of assembly, part of the 30S ribosomal subunit. Forms a tight heterodimer with protein bS6.

Functionally, binds as a heterodimer with protein bS6 to the central domain of the 16S rRNA, where it helps stabilize the platform of the 30S subunit. This chain is Small ribosomal subunit protein bS18, found in Geobacter sulfurreducens (strain ATCC 51573 / DSM 12127 / PCA).